A 158-amino-acid polypeptide reads, in one-letter code: Transcription elongation factor GreA (158 aa).

The protein belongs to the GreA/GreB family.

Functionally, necessary for efficient RNA polymerase transcription elongation past template-encoded arresting sites. The arresting sites in DNA have the property of trapping a certain fraction of elongating RNA polymerases that pass through, resulting in locked ternary complexes. Cleavage of the nascent transcript by cleavage factors such as GreA or GreB allows the resumption of elongation from the new 3'terminus. GreA releases sequences of 2 to 3 nucleotides. The protein is Transcription elongation factor GreA of Zymomonas mobilis subsp. mobilis (strain ATCC 31821 / ZM4 / CP4).